The chain runs to 94 residues: Large ribosomal subunit protein bL25 (94 aa).

The protein belongs to the bacterial ribosomal protein bL25 family. In terms of assembly, part of the 50S ribosomal subunit; part of the 5S rRNA/L5/L18/L25 subcomplex. Contacts the 5S rRNA. Binds to the 5S rRNA independently of L5 and L18.

Its function is as follows. This is one of the proteins that binds to the 5S RNA in the ribosome where it forms part of the central protuberance. The chain is Large ribosomal subunit protein bL25 from Salmonella gallinarum (strain 287/91 / NCTC 13346).